We begin with the raw amino-acid sequence, 134 residues long: MSFIREFKEFVMRGNVIDLAVAVVIGAAFGKIVTALVDKIISPLIGVMVGGIDFSKLSLTLKAATVDTAGKEVPAVVIGYGDFINTILQFIIIAFAIFIIVKMINKVINKQPLPPETPSEDVLLLREIRDSLKK.

2 helical membrane passes run 16-36 (VIDL…VTAL) and 81-101 (GDFI…FIIV).

This sequence belongs to the MscL family. As to quaternary structure, homopentamer.

Its subcellular location is the cell inner membrane. Its function is as follows. Channel that opens in response to stretch forces in the membrane lipid bilayer. May participate in the regulation of osmotic pressure changes within the cell. The chain is Large-conductance mechanosensitive channel from Xylella fastidiosa (strain Temecula1 / ATCC 700964).